An 876-amino-acid polypeptide reads, in one-letter code: DNA double-strand break repair Rad50 ATPase (876 aa).

Residues Arg-11, Asn-31–Thr-37, and Gln-139 contribute to the ATP site. Coiled coils occupy residues Arg-188–Leu-528 and Ser-575–Arg-710. The region spanning Glu-387–Glu-484 is the Zinc-hook domain. The Zn(2+) site is built by Cys-432 and Cys-435.

It belongs to the SMC family. RAD50 subfamily. In terms of assembly, homodimer. Forms a heterotetramer composed of two Mre11 subunits and two Rad50 subunits. Zn(2+) serves as cofactor.

In terms of biological role, part of the Rad50/Mre11 complex, which is involved in the early steps of DNA double-strand break (DSB) repair. The complex may facilitate opening of the processed DNA ends to aid in the recruitment of HerA and NurA. Rad50 controls the balance between DNA end bridging and DNA resection via ATP-dependent structural rearrangements of the Rad50/Mre11 complex. The chain is DNA double-strand break repair Rad50 ATPase from Methanopyrus kandleri (strain AV19 / DSM 6324 / JCM 9639 / NBRC 100938).